Here is a 397-residue protein sequence, read N- to C-terminus: MSTLLNPYFGEFGGMYVPQILMPALRQLEEAFVSAQKDPAFQAEFTDLLKNYAGRPTALTKCRNLTEGTRTTLYLKREDLLHGGAHKTNQVLGQALLAKRMGKTEIIAETGAGQHGVASALASALLGLKCRIYMGAKDVERQSPNVFRMRLMGAEVIPVHSGSATLKDACNEALRDWSGSYEKAHYMLGTAAGPHPFPTIVREFQRMIGEETKAQILEKEGRLPDAVIACVGGGSNAIGMFADFIDETNVGLIGVEPAGHGIESGEHGAPLKHGRVGIYFGMKSPMMQTADGQIEESYSISAGLDFPSVGPQHAFLNSTGRADYVSITDDEALDAFKALSRHEGIIPALESSHALAHALKMMRENPEKEQLLVVNLSGRGDKDIFTVHDILKARGEI.

Lys87 carries the N6-(pyridoxal phosphate)lysine modification.

The protein belongs to the TrpB family. In terms of assembly, tetramer of two alpha and two beta chains. The cofactor is pyridoxal 5'-phosphate.

It catalyses the reaction (1S,2R)-1-C-(indol-3-yl)glycerol 3-phosphate + L-serine = D-glyceraldehyde 3-phosphate + L-tryptophan + H2O. It functions in the pathway amino-acid biosynthesis; L-tryptophan biosynthesis; L-tryptophan from chorismate: step 5/5. The beta subunit is responsible for the synthesis of L-tryptophan from indole and L-serine. The sequence is that of Tryptophan synthase beta chain from Klebsiella pneumoniae (strain 342).